The chain runs to 93 residues: Hematopoietic cell signal transducer (93 aa).

Residues 1-18 (MIHLGHILFLLLLPVAAA) form the signal peptide. Over 19 to 48 (QTTPGERSSLPAFYPGTSGSCSGCGSLSLP) the chain is Extracellular. A helical membrane pass occupies residues 49 to 69 (LLAGLVAADAVASLLIVGAVF). Topologically, residues 70-93 (LCARPRRSPAQEDGKVYINMPGRG) are cytoplasmic. Tyrosine 86 is modified (phosphotyrosine). The tract at residues 86 to 88 (YIN) is GRB2 binding site. The segment at 86 to 89 (YINM) is PIK3R1 binding site.

The protein belongs to the DAP10 family. In terms of assembly, interacts with CLEC5A. Forms an CLEC5A/TYROBP/HCST trimolecular complex depending almost solely on TYROBP. Homodimer; Disulfide-linked. Heterohexamer composed of four subunits of HCST/DAP10 and two subunits of KLRK1. Interacts (via transmembrane domain) with KLRK1 (via transmembrane domain); the interaction is required for KLRK1 NK cell surface and induces NK cell-mediated cytotoxicity. Interacts with PIK3R1 and GRB2. Interacts with CD300H. In terms of processing, phosphorylated; PIK3R1 and GRB2 associate specifically with tyrosine-phosphorylated HCST. O-glycosylated. As to expression, predominantly expressed in hemopoietic cells such as NK cells, subset of T-cells and monocytes. Detected in leukocytes, spleen, and thymus.

The protein localises to the membrane. Functionally, transmembrane adapter protein which associates with KLRK1 to form an activation receptor KLRK1-HCST in lymphoid and myeloid cells; this receptor plays a major role in triggering cytotoxicity against target cells expressing cell surface ligands such as MHC class I chain-related MICA and MICB, and UL16-binding proteins (ULBPs); these ligands are up-regulated by stress conditions and pathological state such as viral infection and tumor transformation. Functions as a docking site for PI3-kinase PIK3R1 and GRB2. Interaction of ULBPs with KLRK1-HCST triggers calcium mobilization and activation of the PIK3R1, MAP2K/ERK, and JAK2/STAT5 signaling pathways. Both PIK3R1 and GRB2 are required for full KLRK1-HCST-mediated activation and ultimate killing of target cells. In NK cells, KLRK1-HCST signaling directly induces cytotoxicity and enhances cytokine production initiated via DAP12/TYROBP-associated receptors. In T-cells, it provides primarily costimulation for TCR-induced signals. KLRK1-HCST receptor plays a role in immune surveillance against tumors and is required for cytolysis of tumors cells; indeed, melanoma cells that do not express KLRK1 ligands escape from immune surveillance mediated by NK cells. This chain is Hematopoietic cell signal transducer (HCST), found in Homo sapiens (Human).